Reading from the N-terminus, the 353-residue chain is Photosystem II protein D1 (353 aa).

The residue at position 2 (Thr-2) is an N-acetylthreonine. At Thr-2 the chain carries Phosphothreonine. Transmembrane regions (helical) follow at residues 29 to 46 (YIGW…TATS), 118 to 133 (HFLL…EWEL), and 142 to 156 (WIAV…AATA). His-118 contacts chlorophyll a. Residue Tyr-126 participates in pheophytin a binding. [CaMn4O5] cluster contacts are provided by Asp-170 and Glu-189. Residues 197–218 (FHMLGVAGVFGGSLFSAMHGSL) traverse the membrane as a helical segment. His-198 lines the chlorophyll a pocket. A quinone-binding positions include His-215 and 264-265 (SF). Residue His-215 participates in Fe cation binding. Fe cation is bound at residue His-272. Residues 274-288 (FLAAWPVVGIWFTAL) form a helical membrane-spanning segment. [CaMn4O5] cluster contacts are provided by His-332, Glu-333, Asp-342, and Ala-344. The propeptide occupies 345 to 353 (VVEAPSTNG).

The protein belongs to the reaction center PufL/M/PsbA/D family. PSII is composed of 1 copy each of membrane proteins PsbA, PsbB, PsbC, PsbD, PsbE, PsbF, PsbH, PsbI, PsbJ, PsbK, PsbL, PsbM, PsbT, PsbX, PsbY, PsbZ, Psb30/Ycf12, at least 3 peripheral proteins of the oxygen-evolving complex and a large number of cofactors. It forms dimeric complexes. Requires The D1/D2 heterodimer binds P680, chlorophylls that are the primary electron donor of PSII, and subsequent electron acceptors. It shares a non-heme iron and each subunit binds pheophytin, quinone, additional chlorophylls, carotenoids and lipids. D1 provides most of the ligands for the Mn4-Ca-O5 cluster of the oxygen-evolving complex (OEC). There is also a Cl(-1) ion associated with D1 and D2, which is required for oxygen evolution. The PSII complex binds additional chlorophylls, carotenoids and specific lipids. as cofactor. In terms of processing, tyr-161 forms a radical intermediate that is referred to as redox-active TyrZ, YZ or Y-Z. Post-translationally, C-terminally processed by CTPA; processing is essential to allow assembly of the oxygen-evolving complex and thus photosynthetic growth.

It is found in the plastid. It localises to the chloroplast thylakoid membrane. It carries out the reaction 2 a plastoquinone + 4 hnu + 2 H2O = 2 a plastoquinol + O2. Functionally, photosystem II (PSII) is a light-driven water:plastoquinone oxidoreductase that uses light energy to abstract electrons from H(2)O, generating O(2) and a proton gradient subsequently used for ATP formation. It consists of a core antenna complex that captures photons, and an electron transfer chain that converts photonic excitation into a charge separation. The D1/D2 (PsbA/PsbD) reaction center heterodimer binds P680, the primary electron donor of PSII as well as several subsequent electron acceptors. The polypeptide is Photosystem II protein D1 (Aethionema grandiflorum (Persian stone-cress)).